A 167-amino-acid chain; its full sequence is NADH-quinone oxidoreductase subunit B 2 (167 aa).

[4Fe-4S] cluster-binding residues include C39, C40, C104, and C134.

It belongs to the complex I 20 kDa subunit family. As to quaternary structure, NDH-1 is composed of 14 different subunits. Subunits NuoB, C, D, E, F, and G constitute the peripheral sector of the complex. [4Fe-4S] cluster is required as a cofactor.

It is found in the cell inner membrane. The enzyme catalyses a quinone + NADH + 5 H(+)(in) = a quinol + NAD(+) + 4 H(+)(out). NDH-1 shuttles electrons from NADH, via FMN and iron-sulfur (Fe-S) centers, to quinones in the respiratory chain. Couples the redox reaction to proton translocation (for every two electrons transferred, four hydrogen ions are translocated across the cytoplasmic membrane), and thus conserves the redox energy in a proton gradient. The chain is NADH-quinone oxidoreductase subunit B 2 from Burkholderia mallei (strain NCTC 10247).